Consider the following 196-residue polypeptide: Putative lipopolysaccharide biosynthesis O-acetyl transferase WbbJ (196 aa).

This sequence belongs to the transferase hexapeptide repeat family.

It functions in the pathway bacterial outer membrane biogenesis; lipopolysaccharide biosynthesis. Functionally, putative O-acetyltransferase that transfers an O-acetyl group to the O antigen. In Escherichia coli (strain K12), this protein is Putative lipopolysaccharide biosynthesis O-acetyl transferase WbbJ (wbbJ).